The following is a 129-amino-acid chain: ATP synthase epsilon chain (129 aa).

This sequence belongs to the ATPase epsilon chain family. As to quaternary structure, F-type ATPases have 2 components, CF(1) - the catalytic core - and CF(0) - the membrane proton channel. CF(1) has five subunits: alpha(3), beta(3), gamma(1), delta(1), epsilon(1). CF(0) has three main subunits: a, b and c.

Its subcellular location is the cell inner membrane. Functionally, produces ATP from ADP in the presence of a proton gradient across the membrane. This is ATP synthase epsilon chain from Nitratiruptor sp. (strain SB155-2).